The following is a 77-amino-acid chain: Large ribosomal subunit protein bL28 (77 aa).

It belongs to the bacterial ribosomal protein bL28 family.

The protein is Large ribosomal subunit protein bL28 of Cupriavidus necator (strain ATCC 17699 / DSM 428 / KCTC 22496 / NCIMB 10442 / H16 / Stanier 337) (Ralstonia eutropha).